We begin with the raw amino-acid sequence, 366 residues long: Di-N-acetylchitobiase (366 aa).

Positions 1-22 (MALCGLPEFTLLLLPLLARLSA) are cleaved as a signal peptide. Positions 23 to 366 (GDCPCSEAAL…EMWGALKPRL (344 aa)) constitute a GH18 domain. Glu-127 (proton donor) is an active-site residue. N-linked (GlcNAc...) asparagine glycans are attached at residues Asn-131, Asn-177, Asn-212, Asn-246, and Asn-283.

The protein belongs to the glycosyl hydrolase 18 family.

It is found in the lysosome. Functionally, involved in the degradation of asparagine-linked glycoproteins. Hydrolyze of N-acetyl-beta-D-glucosamine (1-4)N-acetylglucosamine chitobiose core from the reducing end of the bond, it requires prior cleavage by glycosylasparaginase. This chain is Di-N-acetylchitobiase (Ctbs), found in Mus musculus (Mouse).